The chain runs to 202 residues: MTLWLGPQPLVLASQSRARQALLTNAGIPFEAIPAKLDERGIARVSGLSAPGDIAALLAQEKAAFVSNHHPGRLVLGADQTLALGAREFNKPADRNEAAKQLRELAGRRHELHSAIAVVRNGITLFAEVVIARMTMRPLSDEEIAVYLDEVGDTATCSVGGYQVEGLGVHLFDGIHGDHSTILGLPLLPLLGFLRSQKLLTL.

Aspartate 79 functions as the Proton acceptor in the catalytic mechanism.

This sequence belongs to the Maf family. A divalent metal cation serves as cofactor.

It is found in the cytoplasm. It carries out the reaction a ribonucleoside 5'-triphosphate + H2O = a ribonucleoside 5'-phosphate + diphosphate + H(+). It catalyses the reaction a 2'-deoxyribonucleoside 5'-triphosphate + H2O = a 2'-deoxyribonucleoside 5'-phosphate + diphosphate + H(+). Its function is as follows. Nucleoside triphosphate pyrophosphatase. May have a dual role in cell division arrest and in preventing the incorporation of modified nucleotides into cellular nucleic acids. The protein is Nucleoside triphosphate pyrophosphatase of Rhodopseudomonas palustris (strain BisB5).